Here is a 919-residue protein sequence, read N- to C-terminus: Beta-galactosidase 15 (919 aa).

A signal peptide spans 1 to 31 (MAASRGPPLLGFRALALALLLAILLLLGCSA). The N-linked (GlcNAc...) asparagine glycan is linked to N63. E220 serves as the catalytic Proton donor. E289 acts as the Nucleophile in catalysis. 4 N-linked (GlcNAc...) asparagine glycosylation sites follow: N412, N530, N546, and N855. The SUEL-type lectin domain maps to 822-907 (NAATPELRLQ…KDLAVEAKCS (86 aa)).

The protein belongs to the glycosyl hydrolase 35 family.

It is found in the secreted. It localises to the extracellular space. The protein localises to the apoplast. The catalysed reaction is Hydrolysis of terminal non-reducing beta-D-galactose residues in beta-D-galactosides.. This Oryza sativa subsp. japonica (Rice) protein is Beta-galactosidase 15.